Reading from the N-terminus, the 530-residue chain is Arginine--tRNA ligase (530 aa).

A 'HIGH' region motif is present at residues Ala113–His123.

Belongs to the class-I aminoacyl-tRNA synthetase family. As to quaternary structure, monomer.

Its subcellular location is the cytoplasm. It carries out the reaction tRNA(Arg) + L-arginine + ATP = L-arginyl-tRNA(Arg) + AMP + diphosphate. The polypeptide is Arginine--tRNA ligase (Campylobacter jejuni subsp. jejuni serotype O:2 (strain ATCC 700819 / NCTC 11168)).